A 383-amino-acid chain; its full sequence is ATP phosphoribosyltransferase regulatory subunit (383 aa).

It belongs to the class-II aminoacyl-tRNA synthetase family. HisZ subfamily. As to quaternary structure, heteromultimer composed of HisG and HisZ subunits.

The protein resides in the cytoplasm. Its pathway is amino-acid biosynthesis; L-histidine biosynthesis; L-histidine from 5-phospho-alpha-D-ribose 1-diphosphate: step 1/9. In terms of biological role, required for the first step of histidine biosynthesis. May allow the feedback regulation of ATP phosphoribosyltransferase activity by histidine. The polypeptide is ATP phosphoribosyltransferase regulatory subunit (Paraburkholderia xenovorans (strain LB400)).